The primary structure comprises 314 residues: MRTKNSKIINSEQDIFRNKVIPIKFLSNYNNEILKKPQWMKIKFPVSTNKIKNLTLILRQHNLNTVCEQALCPNLAECFNRGTATFMILGSICTRRCPFCAVSHGKPSLVNKNEPQQLARVIFDMKINYVVITSVVRDDLKDRGAQHFSNCIQEIRNKNNVKIEILVPDFRGMMRESCKIISMNPPNVFNHNLENVPRLYKLIRPGASYIRSLKLLEFFKKLNPNVPTKSGLILGLGETYKEIVHVINDLLDHGVTILTIGQYLQPSSKHFPVQKYITPDEFKKIKNYALSIGFKKVFCGPLIRSSYHAEKYFE.

[4Fe-4S] cluster contacts are provided by Cys-67, Cys-72, Cys-78, Cys-93, Cys-97, Cys-100, and Ser-306. Residues 79-295 (FNRGTATFMI…KNYALSIGFK (217 aa)) form the Radical SAM core domain.

It belongs to the radical SAM superfamily. Lipoyl synthase family. It depends on [4Fe-4S] cluster as a cofactor.

It is found in the cytoplasm. It carries out the reaction [[Fe-S] cluster scaffold protein carrying a second [4Fe-4S](2+) cluster] + N(6)-octanoyl-L-lysyl-[protein] + 2 oxidized [2Fe-2S]-[ferredoxin] + 2 S-adenosyl-L-methionine + 4 H(+) = [[Fe-S] cluster scaffold protein] + N(6)-[(R)-dihydrolipoyl]-L-lysyl-[protein] + 4 Fe(3+) + 2 hydrogen sulfide + 2 5'-deoxyadenosine + 2 L-methionine + 2 reduced [2Fe-2S]-[ferredoxin]. Its pathway is protein modification; protein lipoylation via endogenous pathway; protein N(6)-(lipoyl)lysine from octanoyl-[acyl-carrier-protein]: step 2/2. Its function is as follows. Catalyzes the radical-mediated insertion of two sulfur atoms into the C-6 and C-8 positions of the octanoyl moiety bound to the lipoyl domains of lipoate-dependent enzymes, thereby converting the octanoylated domains into lipoylated derivatives. The chain is Lipoyl synthase from Buchnera aphidicola subsp. Baizongia pistaciae (strain Bp).